A 513-amino-acid polypeptide reads, in one-letter code: Pantetheinase (513 aa).

Positions 1–22 (MITSPLLAYVAILFFCVLKASS) are cleaved as a signal peptide. The CN hydrolase domain occupies 40-307 (APLTPVSHEE…GKLLLSQLDS (268 aa)). Glu80 (proton acceptor) is an active-site residue. N-linked (GlcNAc...) asparagine glycosylation occurs at Asn147. Lys179 acts as the Proton donor in catalysis. Catalysis depends on Cys212, which acts as the Nucleophile. 2 N-linked (GlcNAc...) asparagine glycosylation sites follow: Asn315 and Asn353. Gly487 carries GPI-anchor amidated glycine lipidation. A propeptide spans 488 to 513 (ASADLVAQGLRVMLGVIITIMYSLSW) (removed in mature form).

This sequence belongs to the carbon-nitrogen hydrolase superfamily. BTD/VNN family. Monomer. As to expression, detected in kidney (at protein level).

The protein resides in the cell membrane. It carries out the reaction (R)-pantetheine + H2O = cysteamine + (R)-pantothenate. Amidohydrolase that hydrolyzes specifically one of the carboamide linkages in D-pantetheine thus recycling pantothenic acid (vitamin B5) and releasing cysteamine. This Sus scrofa (Pig) protein is Pantetheinase (VNN1).